We begin with the raw amino-acid sequence, 495 residues long: Solute carrier family 2, facilitated glucose transporter member 3 (495 aa).

The Cytoplasmic portion of the chain corresponds to 1 to 10 (MGTQKVTVSL). The chain crosses the membrane as a helical span at residues 11–32 (IFALSIATIGSFQFGYNTGVIN). Over 33-64 (APETIIKDFLNYTLEEKSENLPTEVLLTSLWS) the chain is Extracellular. Asn-43 is a glycosylation site (N-linked (GlcNAc...) asparagine). Residues 65–85 (LSVAIFSVGGMIGSFSVGLFV) form a helical membrane-spanning segment. The Cytoplasmic segment spans residues 86-90 (NRFGR). Residues 91–111 (RNSMLMVNLLAVAGGCLMGFC) form a helical membrane-spanning segment. The Extracellular segment spans residues 112–118 (KIAQSVE). Residues 119-142 (MLILGRLIIGLFCGLCTGFVPMYI) traverse the membrane as a helical segment. The Cytoplasmic portion of the chain corresponds to 143 to 153 (GEISPTALRGA). A helical transmembrane segment spans residues 154 to 174 (FGTLNQLGIVIGILVAQIFGL). Gln-159 provides a ligand contact to D-glucose. At 175–183 (KVIMGTEEL) the chain is on the extracellular side. A helical transmembrane segment spans residues 184 to 204 (WPLLLGFTIIPAVLQSAALPF). Residues 205 to 269 (CPESPRFLLI…LFRSRSYRQP (65 aa)) lie on the Cytoplasmic side of the membrane. Position 232 is a phosphothreonine (Thr-232). A helical transmembrane segment spans residues 270 to 290 (IIISIMLQLSQQLSGINAVFY). Positions 277 to 279 (QLS) are important for selectivity against fructose. D-glucose is bound by residues 280-281 (QQ) and Asn-286. At 291-304 (YSTGIFKDAGVEEP) the chain is on the extracellular side. Residues 305 to 325 (IYATIGAGVVNTIFTVVSLFL) traverse the membrane as a helical segment. Asn-315 is a D-glucose binding site. Over 326-331 (VERAGR) the chain is Cytoplasmic. The chain crosses the membrane as a helical span at residues 332 to 352 (RTLHMIGLGGMAVCSILMTIS). Residues 353–363 (LLLKDNYNWMS) are Extracellular-facing. The chain crosses the membrane as a helical span at residues 364–389 (FVCIGAILVFVAFFEIGPGPIPWFIV). Positions 378 and 386 each coordinate D-glucose. The Cytoplasmic portion of the chain corresponds to 390–399 (AELFSQGPRP). The chain crosses the membrane as a helical span at residues 400–420 (AAMAVAGCSNWTSNFLVGLLF). Residues 421-429 (PSAAFYLGA) lie on the Extracellular side of the membrane. A helical membrane pass occupies residues 430–450 (YVFIIFTGFLIVFLVFTFFKV). The Cytoplasmic portion of the chain corresponds to 451–495 (PETRGRTFEEITRAFEGQGQDANRAEKGPIVEMNSMQPVKETATV). At Ser-485 the chain carries Phosphoserine. Thr-492 bears the Phosphothreonine mark.

It belongs to the major facilitator superfamily. Sugar transporter (TC 2.A.1.1) family. Glucose transporter subfamily. In terms of assembly, interacts with SMIM43; the interaction may promote SLC2A3-mediated glucose transport to meet the energy needs of mesendoderm differentiation.

It is found in the cell membrane. It localises to the perikaryon. The protein localises to the cell projection. It catalyses the reaction D-glucose(out) = D-glucose(in). The enzyme catalyses D-galactose(in) = D-galactose(out). With respect to regulation, deoxyglucose transport is inhibited by D-glucose, D-galactose and maltose. Galactose transport is inhibited by D-glucose and maltose. Its function is as follows. Facilitative glucose transporter. Can also mediate the uptake of various other monosaccharides across the cell membrane. Mediates the uptake of glucose, 2-deoxyglucose, galactose, mannose, xylose and fucose, and probably also dehydroascorbate. Does not mediate fructose transport. Required for mesendoderm differentiation. The polypeptide is Solute carrier family 2, facilitated glucose transporter member 3 (Canis lupus familiaris (Dog)).